The sequence spans 294 residues: MVQSATEYGILVGVDSSAESDAAVRWAAREASLHDAPITLMHVIAPVVVSWPAGPYMATVLECQEENARHAIEQAQKVVADCLGETHGLTVQTEIRKESVARTLIDASKSAQMVVVGNRGMGALGRVLLGSTSTSLLHYASGPVVVVHGDDQAAHDSRLPVLLGIDGSPASEVATSHAFDEASRRGVDLVALHVWIDVGDIPPIGPTWEEQEETGRALLAERLAGWQERYPDVKVHRRVERAQPAYWLLEEAKQAQLVVVGSHGRGGFTGMLLGSVSSRVAQSATTPVMVVRPR.

Residue G13 participates in ATP binding. Residue K109 forms an Isoglutamyl lysine isopeptide (Lys-Gln) (interchain with Q-Cter in protein Pup) linkage. ATP is bound by residues G117–A123, S131–T132, G164, D197, G261–G267, and S275–S277.

The protein belongs to the universal stress protein A family.

The sequence is that of Universal stress protein MSMEG_3950/MSMEI_3859 from Mycolicibacterium smegmatis (strain ATCC 700084 / mc(2)155) (Mycobacterium smegmatis).